The chain runs to 735 residues: Phosphoribosylformylglycinamidine synthase subunit PurL (735 aa).

Histidine 44 is an active-site residue. The ATP site is built by tyrosine 47 and lysine 86. Glutamate 88 is a binding site for Mg(2+). Residues 89 to 92 (SHNH) and arginine 111 contribute to the substrate site. Catalysis depends on histidine 90, which acts as the Proton acceptor. Aspartate 112 provides a ligand contact to Mg(2+). Residue glutamine 240 participates in substrate binding. Aspartate 268 contacts Mg(2+). Substrate is bound at residue 312-314 (ESQ). Positions 496 and 533 each coordinate ATP. Position 534 (asparagine 534) interacts with Mg(2+). Serine 536 contacts substrate.

Belongs to the FGAMS family. Monomer. Part of the FGAM synthase complex composed of 1 PurL, 1 PurQ and 2 PurS subunits.

It localises to the cytoplasm. It catalyses the reaction N(2)-formyl-N(1)-(5-phospho-beta-D-ribosyl)glycinamide + L-glutamine + ATP + H2O = 2-formamido-N(1)-(5-O-phospho-beta-D-ribosyl)acetamidine + L-glutamate + ADP + phosphate + H(+). It participates in purine metabolism; IMP biosynthesis via de novo pathway; 5-amino-1-(5-phospho-D-ribosyl)imidazole from N(2)-formyl-N(1)-(5-phospho-D-ribosyl)glycinamide: step 1/2. Part of the phosphoribosylformylglycinamidine synthase complex involved in the purines biosynthetic pathway. Catalyzes the ATP-dependent conversion of formylglycinamide ribonucleotide (FGAR) and glutamine to yield formylglycinamidine ribonucleotide (FGAM) and glutamate. The FGAM synthase complex is composed of three subunits. PurQ produces an ammonia molecule by converting glutamine to glutamate. PurL transfers the ammonia molecule to FGAR to form FGAM in an ATP-dependent manner. PurS interacts with PurQ and PurL and is thought to assist in the transfer of the ammonia molecule from PurQ to PurL. The polypeptide is Phosphoribosylformylglycinamidine synthase subunit PurL (Nitratiruptor sp. (strain SB155-2)).